Here is a 290-residue protein sequence, read N- to C-terminus: MAALRVLLSCVRGPLRPPVRCPAWRPFASGANFEYIIAEKRGKNNTVGLIQLNRPKALNALCDGLIDELNQALKTFEEDPAVGAIVLTGGDKAFAAGADIKEMQNLSFQDCYSSKFLKHWDHLTQVKKPVIAAVNGYAFGGGCELAMMCDIIYAGEKAQFAQPEILIGTIPGAGGTQRLTRAVGKSLAMEMVLTGDRISAQDAKQAGLVSKICPVETLVEEAIQCAEKIASNSKIVVAMAKESVNAAFEMTLTEGSKLEKKLFYSTFATDDRKEGMTAFVEKRKANFKDQ.

Residues 1–27 (MAALRVLLSCVRGPLRPPVRCPAWRPF) constitute a mitochondrion transit peptide. A Phosphothreonine modification is found at Thr-46. 98 to 101 (ADIK) is a binding site for substrate. Lys-101 carries the N6-acetyllysine; alternate modification. The residue at position 101 (Lys-101) is an N6-succinyllysine; alternate. The residue at position 114 (Ser-114) is a Phosphoserine. Residue Lys-115 is modified to N6-acetyllysine; alternate. Lys-115 bears the N6-succinyllysine; alternate mark. Lys-118 bears the N6-acetyllysine mark. Gly-141 contributes to the substrate binding site. Lys-204 bears the N6-succinyllysine mark. Lys-211 bears the N6-acetyllysine mark.

This sequence belongs to the enoyl-CoA hydratase/isomerase family. As to quaternary structure, homohexamer; dimer of trimers. In terms of tissue distribution, liver, fibroblast, muscle. Barely detectable in spleen and kidney.

It is found in the mitochondrion matrix. The catalysed reaction is a (3S)-3-hydroxyacyl-CoA = a (2E)-enoyl-CoA + H2O. It catalyses the reaction a (3E)-enoyl-CoA = a 4-saturated (2E)-enoyl-CoA. It carries out the reaction (3E)-hexenoyl-CoA = (2E)-hexenoyl-CoA. The enzyme catalyses (3S)-3-hydroxybutanoyl-CoA = (2E)-butenoyl-CoA + H2O. The catalysed reaction is 3-hydroxyisovaleryl-CoA = 3-methylbut-2-enoyl-CoA + H2O. It catalyses the reaction 3-hydroxypropanoyl-CoA = acryloyl-CoA + H2O. It carries out the reaction 3-hydroxybutanoyl-CoA = (2E)-butenoyl-CoA + H2O. The enzyme catalyses 2-methylpropenoyl-CoA + H2O = (S)-3-hydroxyisobutanoyl-CoA. The catalysed reaction is (3S)-hydroxyhexanoyl-CoA = (2E)-hexenoyl-CoA + H2O. It catalyses the reaction (3S)-hydroxydecanoyl-CoA = (2E)-decenoyl-CoA + H2O. The protein operates within lipid metabolism; fatty acid beta-oxidation. Its function is as follows. Converts unsaturated trans-2-enoyl-CoA species ((2E)-enoyl-CoA) to the corresponding (3S)-3hydroxyacyl-CoA species through addition of a water molecule to the double bond. Catalyzes the hydration of medium- and short-chained fatty enoyl-CoA thioesters from 4 carbons long (C4) up to C16. Has high substrate specificity for crotonyl-CoA ((2E)-butenoyl-CoA) and moderate specificity for acryloyl-CoA, 3-methylcrotonyl-CoA (3-methyl-(2E)-butenoyl-CoA) and methacrylyl-CoA ((2E)-2-methylpropenoyl-CoA). Can bind tiglyl-CoA (2-methylcrotonoyl-CoA), but hydrates only a small amount of this substrate. Plays a key role in the beta-oxidation spiral of short- and medium-chain fatty acid oxidation. At a lower rate than the hydratase reaction, catalyzes the isomerase reaction of trans-3-enoyl-CoA species (such as (3E)-hexenoyl-CoA) to trans-2-enoyl-CoA species (such as (2E)-hexenoyl-CoA), which are subsequently hydrated to 3(S)-3-hydroxyacyl-CoA species (such as (3S)-hydroxyhexanoyl-CoA). The polypeptide is Enoyl-CoA hydratase, mitochondrial (Homo sapiens (Human)).